The chain runs to 1007 residues: Protein vav-1 (1007 aa).

A Calponin-homology (CH) domain is found at 37-151 (CDLWIGCARW…TLSFLSHTKE (115 aa)). Residues 151–239 (ESLSRGVDPF…ENDLQNTPTL (89 aa)) are AC. Residues 153–176 (LSRGVDPFPDTDNNQEGTSNGSEF) form a disordered region. Over residues 163–174 (TDNNQEGTSNGS) the composition is skewed to polar residues. A phosphotyrosine mark is found at Y183, Y200, and Y217. The 198-residue stretch at 240 to 437 (KRNRCIRELY…EDVCNYINEE (198 aa)) folds into the DH domain. Positions 470 to 598 (RVNLDGEVKM…WMTALLLSKS (129 aa)) constitute a PH domain. Residues 610–664 (NHKVAFHSFRVDVKNPATCDVCDKLMKGLQYQGYKCESCNMSMHKECLGLKKCEA) form a Phorbol-ester/DAG-type zinc finger. Residues 688 to 750 (HEGDIVVANS…HLDHVSQSRT (63 aa)) enclose the SH3 1 domain. The tract at residues 778-817 (LPNKLLSDGSSRSLSGPHGSRSSRNSSSSTINGSMDSVPR) is disordered. Residues 782–814 (LLSDGSSRSLSGPHGSRSSRNSSSSTINGSMDS) show a composition bias toward low complexity. In terms of domain architecture, SH2 spans 831–925 (WYMGEMERAK…ALDTCLKNPY (95 aa)). The region spanning 926–991 (SQCKVFKAVH…PLSYVKPYDP (66 aa)) is the SH3 2 domain.

Post-translationally, GEF activity is regulated by phosphorylation on tyrosine residues. As to expression, strong expression in the pharynx, proximal gonad, spermatheca, intestine and rectal epithelia.

Functionally, acts as a guanine nucleotide exchange factor (GEF) for Rho GTPase. Has a critical roles in the generation of rhythmic behaviors: feeding, defecation and ovulation by dynamically regulating the concentration of intracellular calcium. Plays a role in male tail tip morphogenesis. The protein is Protein vav-1 of Caenorhabditis elegans.